Consider the following 550-residue polypeptide: Hydroxylamine reductase (550 aa).

Residues cysteine 3, cysteine 6, cysteine 18, and cysteine 25 each coordinate [2Fe-2S] cluster. 8 residues coordinate hybrid [4Fe-2O-2S] cluster: histidine 249, glutamate 273, cysteine 317, cysteine 405, cysteine 433, cysteine 458, glutamate 492, and lysine 494. Cysteine persulfide is present on cysteine 405.

Belongs to the HCP family. It depends on [2Fe-2S] cluster as a cofactor. The cofactor is hybrid [4Fe-2O-2S] cluster.

Its subcellular location is the cytoplasm. The catalysed reaction is A + NH4(+) + H2O = hydroxylamine + AH2 + H(+). Its function is as follows. Catalyzes the reduction of hydroxylamine to form NH(3) and H(2)O. This chain is Hydroxylamine reductase, found in Pectobacterium carotovorum subsp. carotovorum (strain PC1).